Here is a 587-residue protein sequence, read N- to C-terminus: MSMIDEPLYPIAVLIDELKNDDIQLRLNSIRRLSTIARALGEERTRKELIPFLSENNDDDDEVLLAMAEELGVFIPYVGGVEYAHVLLPPLETLSTVEETCVREKAVESLCRVGSQMRESDLVDHFISLVKRLAAGEWFTARVSACGVFHIAYPSAPDMLKTELRSLYTQLCQDDMPMVRRAAATNLGKFAATVESAHLKTDVMSMFEDLTQDDQDSVRLLAVEGCAALGKLLEPQDCVQHILPVIVNFSQDKSWRVRYMVANQLYELCEAVGPEPTRTELVPAYVRLLRDNEAEVRIAAAGKVTKFCRILNPEIAIQHILPCVKELSSDSSQHVRSALASVIMGMAPVLGKDATIEHLLPIFLSLLKDEFPDVRLNIISKLDQVNQVIGIDLLSQSLLPAIVELAEDRHWRVRLAIIEYIPLLASQLGVGFFDDKLGALCMQWLQDKVHSIRDAAANNLKRLAEEFGPEWAMQHIVPQVLEMVNNPHYLYRMTILRAVSLLAPVMGSEITCSKLLPVVMTASKDRVPNIKFNVAKVLQSLIPIVDQSVVEKTIRPGLVELSEDPDVDVRFFANQALQSIDNVMMSS.

Ser-2 is modified (N-acetylserine). 14 HEAT repeats span residues Ser-2–Glu-42, Arg-44–Gly-80, Val-81–Glu-119, Asp-158–Ser-196, Ala-197–Pro-235, Gln-236–Pro-274, Glu-275–Pro-313, Ile-315–Lys-352, Asp-353–Ile-391, Leu-393–Val-430, Phe-432–Pro-469, Glu-470–Ser-508, Glu-509–Gln-547, and Val-549–Ser-586.

Belongs to the phosphatase 2A regulatory subunit A family. In terms of assembly, PP2A consists of a common heterodimeric core enzyme, composed of a 36 kDa catalytic subunit (subunit C) and a 65 kDa constant regulatory subunit (subunit A), that associates with a variety of regulatory subunits such as subunits B (the R2/B/PR55/B55, R3/B''/PR72/PR130/PR59 and R5/B'/B56 families). Interacts with B'THETA. Interacts with SRK2E/OST1. Interacts with SIC/RON3. As to expression, ubiquitous, with higher levels in roots and flowers (at protein level).

The protein resides in the cytoplasm. Its subcellular location is the cytosol. It is found in the nucleus. The protein localises to the peroxisome. Its function is as follows. The A subunit of protein phosphatase 2A serves as a scaffolding molecule to coordinate the assembly of the catalytic subunit and a variable regulatory B subunit. Involved during developmental process such as seedling and floral developments. Seems to act as a negative regulator of PP2A catalytic activity. Associates with the serine/threonine-protein phosphatase PP2A catalytic subunit C and regulatory subunit B' to positively regulates beta-oxidation of fatty acids and protoauxins in peroxisomes by dephosphorylating peroxisomal beta-oxidation-related proteins. In Arabidopsis thaliana (Mouse-ear cress), this protein is Serine/threonine-protein phosphatase 2A 65 kDa regulatory subunit A beta isoform (PP2AA2).